Here is a 41-residue protein sequence, read N- to C-terminus: Plantazolicin (41 aa).

Residues 1–27 (MTQIKVPTALIASVHGEGQHLFEPMAA) constitute a propeptide that is removed on maturation. At R28 the chain carries N2,N2-dimethylarginine. Positions 28–29 (RC) form a cross-link, thiazole-4-carboxylic acid (Arg-Cys). Cross-links (5-methyloxazole-4-carboxylic acid (Cys-Thr)) lie at residues 29-30 (CT) and 31-32 (CT). A cross-link (thiazole-4-carboxylic acid (Thr-Cys)) is located at residues 30 to 31 (TC). The 5-methyloxazole-4-carboxylic acid (Thr-Thr) cross-link spans 32–33 (TT). Residues 35 to 36 (IS) constitute a cross-link (oxazole-4-carboxylic acid (Ile-Ser)). 3 consecutive cross-links (oxazole-4-carboxylic acid (Ser-Ser)) follow at residues 36 to 37 (SS), 37 to 38 (SS), and 38 to 39 (SS). Residues 39–40 (ST) constitute a cross-link (5-methyloxazoline-4-carboxylic acid (Ser-Thr)).

In terms of processing, maturation of thiazole and oxazole containing antibiotics involves the enzymatic condensation of a Cys, Ser or Thr with the alpha-carbonyl of the preceding amino acid to form a thioether or ether bond, then dehydration to form a double bond with the alpha-amino nitrogen. Thiazoline or oxazoline ring are dehydrogenated to form thiazole or oxazole rings. Post-translationally, 2 forms exist: plantazolicin A and plantazolicin B. The structural difference between them is a dimethylation at Arg-28 in plantazolicin A.

The protein localises to the secreted. Its subcellular location is the cell wall. Its function is as follows. Peptide antibiotic inhibiting growth of Gram-positive bacteria in the dimethylated form plantazolicin A. The desmethyl form plantazolicin B has no antibiotic activity. The mode of action appears to be disruption of cell walls and lysis of cells. Inhibits B.subtilis strain HB0042, B.megaterium strain 7A1 and B.anthracis (MIC=2-4 ug/ml). Weakly inhibits Gram-positive bacteria B.brevis strain ATCC 8246, B.subtilis strain 168, B.cereus strain ATCC 14579 and strain CU1065, B.licheniformis strain ATCC 9789, M.luteus, B.sphaericus, P.granivorans and S.pyogenes (MIC=128 ug/ml). Does not inhibit B.pumilus, P.polymyxa, Arthrobacter sp., S.aureus, vancomycin-resistant E.faecalis, L.monocytogenes, methicillin-resistant S.aureus or Gram-negative bacteria E.coli strain K12, K.terrigena, Pseudomonas sp. and E.carotovora. In Bacillus velezensis (strain DSM 23117 / BGSC 10A6 / LMG 26770 / FZB42) (Bacillus amyloliquefaciens subsp. plantarum), this protein is Plantazolicin.